We begin with the raw amino-acid sequence, 373 residues long: 4-hydroxy-3-methylbut-2-en-1-yl diphosphate synthase (flavodoxin) (373 aa).

C268, C271, C303, and E310 together coordinate [4Fe-4S] cluster.

It belongs to the IspG family. [4Fe-4S] cluster serves as cofactor.

It catalyses the reaction (2E)-4-hydroxy-3-methylbut-2-enyl diphosphate + oxidized [flavodoxin] + H2O + 2 H(+) = 2-C-methyl-D-erythritol 2,4-cyclic diphosphate + reduced [flavodoxin]. It functions in the pathway isoprenoid biosynthesis; isopentenyl diphosphate biosynthesis via DXP pathway; isopentenyl diphosphate from 1-deoxy-D-xylulose 5-phosphate: step 5/6. In terms of biological role, converts 2C-methyl-D-erythritol 2,4-cyclodiphosphate (ME-2,4cPP) into 1-hydroxy-2-methyl-2-(E)-butenyl 4-diphosphate. This Exiguobacterium sp. (strain ATCC BAA-1283 / AT1b) protein is 4-hydroxy-3-methylbut-2-en-1-yl diphosphate synthase (flavodoxin).